The sequence spans 293 residues: G1/S-specific cyclin-D3 (293 aa).

The 126-residue stretch at 27 to 152 (VLQSLLRLEE…LVLGKLKWDL (126 aa)) folds into the Cyclin N-terminal domain. The tract at residues 257 to 293 (REAAQTAPSPVPKAPGGSSSQGPSQTSTPTDVTAIHL) is disordered. Residues Ser-265 and Ser-280 each carry the phosphoserine modification. Positions 271–286 (PGGSSSQGPSQTSTPT) are enriched in low complexity. Residue Thr-284 is modified to Phosphothreonine.

This sequence belongs to the cyclin family. Cyclin D subfamily. As to quaternary structure, interacts with the CDK4 and CDK6 protein kinases to form a serine/threonine kinase holoenzyme complex. The cyclin subunit imparts substrate specificity to the complex. Interacts with ATF5. Interacts with EIF3K. Component of the ternary complex cyclin D/CDK4/CDKN1B required for nuclear translocation and modulation of CDK4-mediated kinase activity. Can form similar complexes with either CDKN1A or CDKN2A. Phosphorylation at Thr-284 by MAP kinases is required for ubiquitination and degradation by the DCX(AMBRA1) complex. Post-translationally, ubiquitinated by the DCX(AMBRA1) complex during the transition from G1 to S cell phase, leading to its degradation: ubiquitination is dependent on Thr-284 phosphorylation. The DCX(AMBRA1) complex represents the major regulator of CCND3 stability during the G1/S transition. Polyubiquitinated by the SCF(FBXL2) complex, leading to proteasomal degradation.

It is found in the nucleus. The protein resides in the cytoplasm. Functionally, regulatory component of the cyclin D3-CDK4 (DC) complex that phosphorylates and inhibits members of the retinoblastoma (RB) protein family including RB1 and regulates the cell-cycle during G(1)/S transition. Phosphorylation of RB1 allows dissociation of the transcription factor E2F from the RB/E2F complex and the subsequent transcription of E2F target genes which are responsible for the progression through the G(1) phase. Hypophosphorylates RB1 in early G(1) phase. Cyclin D-CDK4 complexes are major integrators of various mitogenenic and antimitogenic signals. Component of the ternary complex, cyclin D3/CDK4/CDKN1B, required for nuclear translocation and activity of the cyclin D-CDK4 complex. Shows transcriptional coactivator activity with ATF5 independently of CDK4. The protein is G1/S-specific cyclin-D3 of Rattus norvegicus (Rat).